The sequence spans 20 residues: Snaclec ophioluxin subunit alpha (20 aa).

A disulfide bridge connects residues Cys-4 and Cys-15. One can recognise a C-type lectin domain in the interval 11-20 (YDQHCYRIIN).

Belongs to the snaclec family. Heterodimer of subunits alpha and beta; disulfide-linked. Expressed by the venom gland.

It is found in the secreted. Binds to the platelet and collagen receptor glycoprotein VI (GP6) and activates platelet aggregation. This is Snaclec ophioluxin subunit alpha from Ophiophagus hannah (King cobra).